Consider the following 133-residue polypeptide: Hemiptericin (133 aa).

Antibacterial peptide. Affects Gram-negative bacteria. The chain is Hemiptericin from Pyrrhocoris apterus (Sap sucking bug).